A 696-amino-acid polypeptide reads, in one-letter code: SLIT and NTRK-like protein 1 (696 aa).

The first 17 residues, 1 to 17, serve as a signal peptide directing secretion; sequence MLLWILLLETSLCFAAG. Residues 18–57 enclose the LRRNT 1 domain; that stretch reads NVTGDVCKEKICSCNEIEGDLHVDCEKKGFTSLQRFTAPT. Over 18–622 the chain is Extracellular; the sequence is NVTGDVCKEK…SRVSISVLVP (605 aa). LRR repeat units lie at residues 59 to 80, 83 to 104, 106 to 128, 131 to 152, 155 to 176, and 178 to 199; these read QFYH…EFAN, NAVS…AFLG, QLVK…TFLG, DLEY…AFQD, KLEV…VFQY, and PITH…EVLE. The LRRCT 1 domain maps to 212-263; sequence NPWDCTCDLLSLKEWLENIPKNALIGRVVCEAPTRLQGKDLNETTEQDLCPL. The disordered stretch occupies residues 265–314; that stretch reads NRVDSSLPAPPAQEETFAPGPLPTPFKTNGQEDHATPGSAPNGGTKIPGN. One can recognise an LRRNT 2 domain in the interval 332 to 373; sequence NKPLANSLPCPGGCSCDHIPGSGLKMNCNNRNVSSLADLKPK. 6 LRR repeats span residues 376-397, 400-421, 424-445, 448-469, 472-493, and 495-516; these read NVQE…HFVD, NLIL…TFKN, DLRW…KFAG, NLEY…TFNA, KLRI…VFAG, and SLSK…GVLD. Residues 529–580 form the LRRCT 2 domain; it reads NPWECSCTIVPFKQWAERLGSEVLMSDLKCETPVNFFRKDFMLLSNDEICPQ. A helical transmembrane segment spans residues 623-643; it reads GLLLVFVTSAFTVVGMLVFIL. Residues 644-696 are Cytoplasmic-facing; it reads RNRKRSKRRDANSSASEINSLQTVCDSSYWHNGPYNADGAHRVYDCGSHSLSD. Ser-695 bears the Phosphoserine; by CK2 mark.

Belongs to the SLITRK family. Can form homodimers; homodimerization requires repeat LRR 2. Interacts with YWHAB, YWHAE, YWHAG, YWHAH, SFN, YWHAQ and YWHAZ. In terms of processing, undergoes proteolytic cleavage that results in shedding of the ectodomain and cleavage of the C-terminal cytoplasmic tail. Glycosylated. Phosphorylation at Ser-695 is necessary for proper function in promoting neurite outgrowth. As to expression, expressed predominantly in the frontal lobe of the cerebral cortex of the brain. Also expressed in some astrocytic brain tumors such as astrocytomas, oligodendrogliomas, glioblastomas, gangliogliomas and primitive neuroectodermal tumors.

Its subcellular location is the membrane. It is found in the secreted. The protein localises to the synapse. Functionally, it is involved in synaptogenesis and promotes excitatory synapse differentiation. Enhances neuronal dendrite outgrowth. This is SLIT and NTRK-like protein 1 (SLITRK1) from Homo sapiens (Human).